The following is a 466-amino-acid chain: Asparagine--tRNA ligase (466 aa).

The protein belongs to the class-II aminoacyl-tRNA synthetase family. Homodimer.

The protein localises to the cytoplasm. It carries out the reaction tRNA(Asn) + L-asparagine + ATP = L-asparaginyl-tRNA(Asn) + AMP + diphosphate + H(+). This Psychromonas ingrahamii (strain DSM 17664 / CCUG 51855 / 37) protein is Asparagine--tRNA ligase.